We begin with the raw amino-acid sequence, 213 residues long: Uracil phosphoribosyltransferase (213 aa).

Residues Arg78, Arg103, and Asp131–Thr139 each bind 5-phospho-alpha-D-ribose 1-diphosphate. Residues Ile197 and Gly202 to Ala204 each bind uracil. Residue Asp203 coordinates 5-phospho-alpha-D-ribose 1-diphosphate.

It belongs to the UPRTase family. Mg(2+) serves as cofactor.

The catalysed reaction is UMP + diphosphate = 5-phospho-alpha-D-ribose 1-diphosphate + uracil. Its pathway is pyrimidine metabolism; UMP biosynthesis via salvage pathway; UMP from uracil: step 1/1. Its activity is regulated as follows. Allosterically activated by GTP. In terms of biological role, catalyzes the conversion of uracil and 5-phospho-alpha-D-ribose 1-diphosphate (PRPP) to UMP and diphosphate. The polypeptide is Uracil phosphoribosyltransferase (Bifidobacterium adolescentis (strain ATCC 15703 / DSM 20083 / NCTC 11814 / E194a)).